The chain runs to 202 residues: Dephospho-CoA kinase (202 aa).

In terms of domain architecture, DPCK spans 6–202; it reads KVSITGDLSS…EYFYALKGAL (197 aa). Position 14 to 19 (14 to 19) interacts with ATP; sequence SSGKTE.

It belongs to the CoaE family.

The protein localises to the cytoplasm. The enzyme catalyses 3'-dephospho-CoA + ATP = ADP + CoA + H(+). It functions in the pathway cofactor biosynthesis; coenzyme A biosynthesis; CoA from (R)-pantothenate: step 5/5. In terms of biological role, catalyzes the phosphorylation of the 3'-hydroxyl group of dephosphocoenzyme A to form coenzyme A. The chain is Dephospho-CoA kinase from Chlamydia abortus (strain DSM 27085 / S26/3) (Chlamydophila abortus).